Here is a 434-residue protein sequence, read N- to C-terminus: MNLFLAGLDHTTAPVEIREQLAFSQTDLPSALMQLTSSETGTPPLFAEAVILSTCNRVELYGVTNPGTTAQHVVDFLAAFHRRPAASFVHTLYFYQGEAVARHLCATAAGLRSLVLGEAQIQGQVRNAYEAAQRIGSVGSILHRLFQIALVAGKRVRHETTIGKGAASVSQAGVELARRRLGDLRGREVLLIGGGEVSELAAQNLIANGADRLTIVNRTSARAAALAERYGAEMLDFGALPQALARADIVISSTAAPVPIIYRHHVAEAIAHKQRARACGECDPPTMLLIDLAVPRDIAADVAQIPGVHLFTVDDLREVVSHTIELRSAVLEIAQQIVEEQVQEFLSWMRTQEALPVLTMLRQRAEEVRNEELARALRRLHDLSPEQRAVIEGLSRSIVNKLLHLPTRCLREAAAHGQGKRYASILAELFNLEH.

Residues 54–57 (TCNR), Ser-113, 118–120 (EAQ), and Gln-124 each bind substrate. Catalysis depends on Cys-55, which acts as the Nucleophile. 193–198 (GGGEVS) is a binding site for NADP(+).

It belongs to the glutamyl-tRNA reductase family. As to quaternary structure, homodimer.

The enzyme catalyses (S)-4-amino-5-oxopentanoate + tRNA(Glu) + NADP(+) = L-glutamyl-tRNA(Glu) + NADPH + H(+). It functions in the pathway porphyrin-containing compound metabolism; protoporphyrin-IX biosynthesis; 5-aminolevulinate from L-glutamyl-tRNA(Glu): step 1/2. It participates in porphyrin-containing compound metabolism; chlorophyll biosynthesis. In terms of biological role, catalyzes the NADPH-dependent reduction of glutamyl-tRNA(Glu) to glutamate 1-semialdehyde (GSA). The chain is Glutamyl-tRNA reductase from Chloroflexus aurantiacus (strain ATCC 29366 / DSM 635 / J-10-fl).